The following is a 522-amino-acid chain: MEELQGYFEKDRSRQQPFLYPLLFQEYIYALAHDRGLNRNGSIFYEPLEVFGYDSKSSLALVKRLITRIYQQHFFLSSVNDSNQNQFVGHHHTNFFYSRFYSQMISEGFAIIVEIPFSLQLVSYLKEKEIPKSHNLRSIHSIFPFLEDKLLHFNYVSDILIPHPIHMEILVQILQCWIQDVPLLHFLRFFLHEYHNWNSFFITQNKSIYLFSKETKRLFRFLYNSYVYECEFVFVFLRKYSSYLRFTSFRTFLERRYFYGKMEHLQTEHLIIVCCDYFNGTLWSFKDPFMHYARCQGKAILVSKGTHLLMKKWKYNFVNLWQYYFHFWYQSYRIHINQLSKHSFHFLGYLSSLLKNSSTVRNQMLDNSFLIDTLTTKFDTAVPVIFLIVSLSKAQFCTVSGHPISKPIWTDLSDSGIIERFGRICRNLSHYHSGSSKKQGLYRIKYILRLSCARTLARKHKSTVRTFLQRLGSRLLEEFFTEGEQDLSLILPKAIPFPFQGSHRERIWYLDIIRINDLVNRL.

The protein belongs to the intron maturase 2 family. MatK subfamily.

Its subcellular location is the plastid. The protein resides in the chloroplast. In terms of biological role, usually encoded in the trnK tRNA gene intron. Probably assists in splicing its own and other chloroplast group II introns. The chain is Maturase K from Pillansia templemannii.